The sequence spans 394 residues: Elongation factor Tu (394 aa).

Residues 10–205 (KPHVNIGTIG…VDTWIPLPPR (196 aa)) form the tr-type G domain. Residues 19 to 26 (GHVDHGKT) are G1. 19–26 (GHVDHGKT) serves as a coordination point for GTP. Thr-26 contributes to the Mg(2+) binding site. Residues 60–64 (GITIN) are G2. The G3 stretch occupies residues 81–84 (DCPG). GTP-binding positions include 81-85 (DCPGH) and 136-139 (NKCD). A G4 region spans residues 136–139 (NKCD). The interval 174 to 176 (SAL) is G5.

The protein belongs to the TRAFAC class translation factor GTPase superfamily. Classic translation factor GTPase family. EF-Tu/EF-1A subfamily. As to quaternary structure, monomer.

It is found in the cytoplasm. The enzyme catalyses GTP + H2O = GDP + phosphate + H(+). GTP hydrolase that promotes the GTP-dependent binding of aminoacyl-tRNA to the A-site of ribosomes during protein biosynthesis. The protein is Elongation factor Tu of Phocaeicola vulgatus (strain ATCC 8482 / DSM 1447 / JCM 5826 / CCUG 4940 / NBRC 14291 / NCTC 11154) (Bacteroides vulgatus).